Reading from the N-terminus, the 621-residue chain is SH2B adapter protein 2 (621 aa).

At Tyr-47 the chain carries Phosphotyrosine. Ser-130 is subject to Phosphoserine. The tract at residues 143–166 is disordered; that stretch reads RRSSPEPDGGATPKAAEPASEPRD. The PH domain occupies 186-299; sequence DIQREGALRF…WVADIQGCVD (114 aa). Ser-303 carries the phosphoserine modification. Residues 409–507 enclose the SH2 domain; it reads WFHGTLSRVK…SADITLRSYV (99 aa). Disordered stretches follow at residues 507 to 528 and 549 to 611; these read VRAQ…PVPA and PASP…LGRA. The span at 552–571 shows a compositional bias: low complexity; sequence PSNGAGASSSSGSSSSATSL. Ser-597 is subject to Phosphoserine. Position 618 is a phosphotyrosine (Tyr-618).

This sequence belongs to the SH2B adapter family. As to quaternary structure, homodimer. Interacts with KIT/c-KIT, SHC1, EPOR, PDGFR, VAV1 and VAV3. Interacts (via N-terminal region) with SHC1. Interacts (via the phosphorylated C-terminus) with GRB2. Interacts (via its SH2 domain) with EPOR, INSR and KIT. Interacts with GRB2 after B-cell antigen receptor stimulation. Interacts (via PH domain) with VAV3. Interacts with NTRK1, NTRK2 and NTRK3 (phosphorylated); after stimulation of the receptor by its extracellular ligand and subsequent autophosphorylation of the receptor. Binds INSR, GRB2, ASB6 and CAP. Insulin stimulation leads to dissociation of CAP. Binds CBS only when SH2B2/APS has become phosphorylated. INSR binding does not depend on the phosphorylation of SH2B2/APS. In terms of processing, tyrosine phosphorylated by JAK2, KIT and other kinases activated by B-cell receptor in response to stimulation with cytokines, IL3, IL5, PDGF, IGF1, IGF2, CSF2/GM-CSF and cross-linking of the B-cell receptor complex. As to expression, strongly expressed in brain; also expressed in spleen, kidney and skeletal muscle, and at low levels in small intestine and bone marrow. Strongly expressed in B-cell lines, but not T-cell lines. Also expressed in myeloid and fibroblast cell lines.

It is found in the cytoplasm. It localises to the cell membrane. In terms of biological role, adapter protein for several members of the tyrosine kinase receptor family. Involved in multiple signaling pathways. May be involved in coupling from immunoreceptor to Ras signaling. Acts as a negative regulator of cytokine signaling in collaboration with CBL. Binds to EPOR and suppresses EPO-induced STAT5 activation, possibly through a masking effect on STAT5 docking sites in EPOR. Suppresses PDGF-induced mitogenesis. May induce cytoskeletal reorganization via interaction with VAV3. The polypeptide is SH2B adapter protein 2 (Sh2b2) (Mus musculus (Mouse)).